We begin with the raw amino-acid sequence, 244 residues long: 5-oxoprolinase subunit A (244 aa).

This sequence belongs to the LamB/PxpA family. In terms of assembly, forms a complex composed of PxpA, PxpB and PxpC.

It carries out the reaction 5-oxo-L-proline + ATP + 2 H2O = L-glutamate + ADP + phosphate + H(+). In terms of biological role, catalyzes the cleavage of 5-oxoproline to form L-glutamate coupled to the hydrolysis of ATP to ADP and inorganic phosphate. This Salmonella newport (strain SL254) protein is 5-oxoprolinase subunit A.